Reading from the N-terminus, the 59-residue chain is UPF0391 membrane protein LPC_1949 (59 aa).

The next 2 membrane-spanning stretches (helical) occupy residues 5-25 (ALIF…GIAV) and 30-50 (IAKI…IMGL).

This sequence belongs to the UPF0391 family.

The protein resides in the cell membrane. This Legionella pneumophila (strain Corby) protein is UPF0391 membrane protein LPC_1949.